The chain runs to 171 residues: Thioredoxin-2 (171 aa).

Residues 41–169 enclose the Thioredoxin domain; that stretch reads AFNASPSTSQ…LQALISANHP (129 aa). An intrachain disulfide couples C95 to C98.

This sequence belongs to the thioredoxin family.

It localises to the cytoplasm. The protein localises to the vacuole. In terms of biological role, thioredoxin involved in responses to oxidative and cell wall stresses. Plays an important role in appressorium formation on hyphal tips. TRX2 may affect invasive growth via the MST11-MST7-PMK1 pathway since it is required for the proper folding or dimerization of MAPKK MST7. In Pyricularia oryzae (strain 70-15 / ATCC MYA-4617 / FGSC 8958) (Rice blast fungus), this protein is Thioredoxin-2.